A 217-amino-acid polypeptide reads, in one-letter code: Deoxyribose-phosphate aldolase (217 aa).

The Proton donor/acceptor role is filled by aspartate 95. Lysine 156 acts as the Schiff-base intermediate with acetaldehyde in catalysis. Residue lysine 184 is the Proton donor/acceptor of the active site.

The protein belongs to the DeoC/FbaB aldolase family. DeoC type 1 subfamily.

Its subcellular location is the cytoplasm. The enzyme catalyses 2-deoxy-D-ribose 5-phosphate = D-glyceraldehyde 3-phosphate + acetaldehyde. It functions in the pathway carbohydrate degradation; 2-deoxy-D-ribose 1-phosphate degradation; D-glyceraldehyde 3-phosphate and acetaldehyde from 2-deoxy-alpha-D-ribose 1-phosphate: step 2/2. Catalyzes a reversible aldol reaction between acetaldehyde and D-glyceraldehyde 3-phosphate to generate 2-deoxy-D-ribose 5-phosphate. This is Deoxyribose-phosphate aldolase from Thermosynechococcus vestitus (strain NIES-2133 / IAM M-273 / BP-1).